A 293-amino-acid polypeptide reads, in one-letter code: Elongation factor Ts (293 aa).

The interval 80–83 (TDFV) is involved in Mg(2+) ion dislocation from EF-Tu.

Belongs to the EF-Ts family.

It localises to the cytoplasm. In terms of biological role, associates with the EF-Tu.GDP complex and induces the exchange of GDP to GTP. It remains bound to the aminoacyl-tRNA.EF-Tu.GTP complex up to the GTP hydrolysis stage on the ribosome. This chain is Elongation factor Ts, found in Burkholderia vietnamiensis (strain G4 / LMG 22486) (Burkholderia cepacia (strain R1808)).